A 155-amino-acid chain; its full sequence is Arginine repressor (155 aa).

The protein belongs to the ArgR family.

It is found in the cytoplasm. It functions in the pathway amino-acid biosynthesis; L-arginine biosynthesis [regulation]. Its function is as follows. Regulates arginine biosynthesis genes. The chain is Arginine repressor from Mannheimia succiniciproducens (strain KCTC 0769BP / MBEL55E).